Reading from the N-terminus, the 690-residue chain is Protease 2 (690 aa).

Active-site charge relay system residues include S534, D619, and H654.

It belongs to the peptidase S9A family.

The catalysed reaction is Hydrolysis of -Arg-|-Xaa- and -Lys-|-Xaa- bonds in oligopeptides, even when P1' residue is proline.. Cleaves peptide bonds on the C-terminal side of lysyl and argininyl residues. This Moraxella lacunata protein is Protease 2 (ptrB).